Reading from the N-terminus, the 688-residue chain is Amino-acid acetyltransferase, mitochondrial (688 aa).

The transit peptide at M1–P45 directs the protein to the mitochondrion. Disordered stretches follow at residues M1–Y59 and L96–Q119. 3 stretches are compositionally biased toward polar residues: residues A12–V25, N34–K57, and T106–Q119. The region spanning N509–P678 is the N-acetyltransferase domain.

This sequence belongs to the acetyltransferase family.

It localises to the mitochondrion. The catalysed reaction is L-glutamate + acetyl-CoA = N-acetyl-L-glutamate + CoA + H(+). The protein operates within amino-acid biosynthesis; L-arginine biosynthesis; N(2)-acetyl-L-ornithine from L-glutamate: step 1/4. In terms of biological role, N-acetylglutamate synthase involved in arginine biosynthesis. In Aspergillus flavus (strain ATCC 200026 / FGSC A1120 / IAM 13836 / NRRL 3357 / JCM 12722 / SRRC 167), this protein is Amino-acid acetyltransferase, mitochondrial (arg2).